A 316-amino-acid chain; its full sequence is Beta-galactosidase small subunit (316 aa).

It belongs to the bacterial beta-galactosidase small subunit family. In terms of assembly, heterodimer of a large (LacL) and a small subunit (LacM).

The enzyme catalyses Hydrolysis of terminal non-reducing beta-D-galactose residues in beta-D-galactosides.. In terms of biological role, component of a beta-galactosidase. This chain is Beta-galactosidase small subunit (lacM), found in Lactobacillus acidophilus (strain ATCC 700396 / NCK56 / N2 / NCFM).